We begin with the raw amino-acid sequence, 355 residues long: Protein pelota homolog (355 aa).

It belongs to the eukaryotic release factor 1 family. Pelota subfamily. Monomer. It depends on a divalent metal cation as a cofactor.

The protein resides in the cytoplasm. Functionally, may function in recognizing stalled ribosomes, interact with stem-loop structures in stalled mRNA molecules, and effect endonucleolytic cleavage of the mRNA. May play a role in the release non-functional ribosomes and degradation of damaged mRNAs. Has endoribonuclease activity. In Haloarcula marismortui (strain ATCC 43049 / DSM 3752 / JCM 8966 / VKM B-1809) (Halobacterium marismortui), this protein is Protein pelota homolog.